Consider the following 468-residue polypeptide: Argininosuccinate lyase (468 aa).

The protein belongs to the lyase 1 family. Argininosuccinate lyase subfamily.

The protein resides in the cytoplasm. The catalysed reaction is 2-(N(omega)-L-arginino)succinate = fumarate + L-arginine. The protein operates within amino-acid biosynthesis; L-arginine biosynthesis; L-arginine from L-ornithine and carbamoyl phosphate: step 3/3. This chain is Argininosuccinate lyase, found in Cutibacterium acnes (strain DSM 16379 / KPA171202) (Propionibacterium acnes).